Consider the following 122-residue polypeptide: Large ribosomal subunit protein uL14 (122 aa).

The protein belongs to the universal ribosomal protein uL14 family. As to quaternary structure, part of the 50S ribosomal subunit. Forms a cluster with proteins L3 and L19. In the 70S ribosome, L14 and L19 interact and together make contacts with the 16S rRNA in bridges B5 and B8.

In terms of biological role, binds to 23S rRNA. Forms part of two intersubunit bridges in the 70S ribosome. The polypeptide is Large ribosomal subunit protein uL14 (Ureaplasma parvum serovar 3 (strain ATCC 27815 / 27 / NCTC 11736)).